A 293-amino-acid polypeptide reads, in one-letter code: Nucleotide-binding protein BC_5156 (293 aa).

ATP is bound at residue 14 to 21; the sequence is GMSGAGKT. 65 to 68 contacts GTP; it reads DLRG.

It belongs to the RapZ-like family.

In terms of biological role, displays ATPase and GTPase activities. This is Nucleotide-binding protein BC_5156 from Bacillus cereus (strain ATCC 14579 / DSM 31 / CCUG 7414 / JCM 2152 / NBRC 15305 / NCIMB 9373 / NCTC 2599 / NRRL B-3711).